Consider the following 121-residue polypeptide: Chronic lymphocytic leukemia up-regulated protein 1 (121 aa).

In terms of tissue distribution, specifically expressed in chronic lymphocytic leukemia (CLL) cells from patients without immunoglobulin heavy-chain hypermutations. Expression is detected in all CLL cells and levels are similar in patients before and after treatment.

It localises to the cytoplasm. The chain is Chronic lymphocytic leukemia up-regulated protein 1 (CLLU1) from Homo sapiens (Human).